We begin with the raw amino-acid sequence, 189 residues long: Accessory gene regulator protein B (189 aa).

5 helical membrane passes run 49–69, 81–100, 110–130, 143–163, and 164–184; these read IAYILNIFLFTLITNLTFYLI, SFWCYVESIILFILLPLVIV, IILTVISLGVISVYAPAATKK, YYAIIVSLTLFIITLIIKEPF, and AQFIQLGIIIEAITLLPIFFI.

The protein belongs to the AgrB family.

Its subcellular location is the cell membrane. In terms of biological role, essential for the production of a quorum sensing system signal molecule, the autoinducing peptide (AIP). This quorum sensing system is responsible for the regulation of the expression of virulence factor genes. Involved in the proteolytic processing of AgrD, the precursor of AIP. This Staphylococcus aureus (strain COL) protein is Accessory gene regulator protein B.